We begin with the raw amino-acid sequence, 472 residues long: FAD-dependent monooxygenase ltmM (472 aa).

A helical transmembrane segment spans residues 7–27 (VIIVGGSVAGLSLAHCLEKIG). FAD is bound by residues glutamate 34, glycine 48, and arginine 107. Asparagine 186 carries N-linked (GlcNAc...) asparagine glycosylation. Residues aspartate 306 and alanine 319 each coordinate FAD. A helical transmembrane segment spans residues 450–470 (IVYALYLVAAAAFILYCLSSL).

This sequence belongs to the paxM FAD-dependent monooxygenase family. Requires FAD as cofactor.

It localises to the membrane. It functions in the pathway secondary metabolite biosynthesis. Functionally, FAD-dependent monooxygenase; part of the gene cluster that mediates the biosynthesis of lolitrems, indole-diterpene mycotoxins that are potent tremorgens in mammals, and are synthesized by clavicipitaceous fungal endophytes in association with their grass hosts. The geranylgeranyl diphosphate (GGPP) synthase ltmG is proposed to catalyze the first step in lolitrem biosynthesis. LtmG catalyzes a series of iterative condensations of isopentenyl diphosphate (IPP) with dimethylallyl diphosphate (DMAPP), geranyl diphosphate (GPP), and farnesyl diphosphate (FPP), to form GGPP. GGPP then condenses with indole-3-glycerol phosphate to form 3-geranylgeranylindole, an acyclic intermediate, to be incorporated into paxilline. Either ltmG or ltmC could be responsible for this step, as both are putative prenyl transferases. The FAD-dependent monooxygenase ltmM then catalyzes the epoxidation of the two terminal alkenes of the geranylgeranyl moiety, which is subsequently cyclized by ltmC, to paspaline. The cytochrome P450 monooxygenases ltmQ and ltmP can sequentially oxidize paspaline to terpendole E and terpendole F. Alternatively, ltmP converts paspaline to an intermediate which is oxidized by ltmQ to terpendole F. LtmF, ltmK, ltmE and ltmJ appear to be unique to the epichloe endophytes. The prenyltransferase ltmF is involved in the 27-hydroxyl-O-prenylation. The cytochrome P450 monooxygenase ltmK is required for the oxidative acetal ring formation. The multi-functional prenyltransferase ltmE is required for C20- and C21-prenylations of the indole ring of paspalanes and acts together with the cytochrome P450 monooxygenase ltmJ to yield lolitremanes by multiple oxidations and ring closures. The stereoisomer pairs of lolitriol and lolitrem N or lolitrem B and lolitrem F may be attributed to variations in the way in which ring closure can occur under the action of ltmJ. While the major product of this pathway is lolitrem B, the prenyl transferases and cytochrome P450 monooxygenases identified in this pathway have a remarkable versatility in their regio- and stereo-specificities to generate a diverse range of metabolites that are products of a metabolic grid rather than a linear pathway. This Epichloe festucae (strain Fl1) protein is FAD-dependent monooxygenase ltmM (ltmM).